The chain runs to 265 residues: Glutamate racemase 2 (265 aa).

Substrate contacts are provided by residues 7-8 and 39-40; these read DS and YG. Cys70 functions as the Proton donor/acceptor in the catalytic mechanism. 71–72 serves as a coordination point for substrate; sequence NT. The active-site Proton donor/acceptor is Cys182. Position 183–184 (183–184) interacts with substrate; sequence TH.

The protein belongs to the aspartate/glutamate racemases family.

It catalyses the reaction L-glutamate = D-glutamate. The protein operates within cell wall biogenesis; peptidoglycan biosynthesis. Its function is as follows. Provides the (R)-glutamate required for cell wall biosynthesis. The chain is Glutamate racemase 2 (yrpC) from Bacillus subtilis (strain 168).